Here is a 690-residue protein sequence, read N- to C-terminus: Glycine--tRNA ligase beta subunit (690 aa).

The protein belongs to the class-II aminoacyl-tRNA synthetase family. In terms of assembly, tetramer of two alpha and two beta subunits.

The protein localises to the cytoplasm. It catalyses the reaction tRNA(Gly) + glycine + ATP = glycyl-tRNA(Gly) + AMP + diphosphate. This is Glycine--tRNA ligase beta subunit from Syntrophus aciditrophicus (strain SB).